Here is a 464-residue protein sequence, read N- to C-terminus: Argininosuccinate lyase (464 aa).

Belongs to the lyase 1 family. Argininosuccinate lyase subfamily.

The protein localises to the cytoplasm. It carries out the reaction 2-(N(omega)-L-arginino)succinate = fumarate + L-arginine. Its pathway is amino-acid biosynthesis; L-arginine biosynthesis; L-arginine from L-ornithine and carbamoyl phosphate: step 3/3. This is Argininosuccinate lyase from Ectopseudomonas mendocina (strain ymp) (Pseudomonas mendocina).